Reading from the N-terminus, the 2345-residue chain is Nonribisomal peptide synthetase malG (2345 aa).

The adenylation 1 stretch occupies residues 226 to 620; it reads FSEQAKKNPT…VGRMGTVVKV (395 aa). The region spanning 766 to 839 is the Carrier 1 domain; it reads TENETLLRLL…EAAGTMISAG (74 aa). At Ser-800 the chain carries O-(pantetheine 4'-phosphoryl)serine. The interval 877–1292 is condensation 1; sequence EEIYPSTPLQ…LLCPSDKSKL (416 aa). Residues 1317–1707 form an adenylation 2 region; sequence VRSERTAVSA…GRKNREVKLR (391 aa). The Carrier 2 domain maps to 1843–1926; that stretch reads QPHESTALFV…DIARLIEGVK (84 aa). Ser-1885 is subject to O-(pantetheine 4'-phosphoryl)serine. The segment at 1969-2256 is reductase (R) domain; the sequence is GMSVFLTGGT…PRQLNALQSE (288 aa).

This sequence belongs to the NRP synthetase family.

The enzyme catalyses L-proline + L-tryptophan + 2 ATP + NADPH = (S)-3-(indol-3-ylmethyl)-6,7,8,8a-tetrahydropyrrolo[1,2-a]pyrazin-1-one + 2 AMP + 2 diphosphate + NADP(+) + H2O + H(+). In terms of biological role, nonribisomal peptide synthetase; part of the gene cluster that mediates the biosynthesis of malbrancheamide, a dichlorinated fungal indole alkaloid that belongs to a family of natural products containing a characteristic bicyclo[2.2.2]diazaoctane core. The first step of malbrancheamide biosynthesis involves coupling of L-proline and L-tryptophan by malG, a bimodular NRPS, to produce L-Pro-L-Trp aldehyde through reductive offloading. This compound undergoes spontaneous cyclization and dehydration to give a dienamine which is reverse prenylated at C-2 by malE. The other prenyltransferase present in the cluster, malB, displays modest activity, suggesting that may be a redundant gene in the pathway. Subsequently, a [4+2] Diels-Alder cyclo-addition catalyzed by the bifunctional enzyme malC forms the characteristic bicyclo[2.2.2]diazaoctane ring of premalbrancheamid. Finally, the flavin-dependent halogenase malA catalyzes the iterative dichlorination of the indole ring of premalbrancheamide to yield C-9 monochlorinated malbrancheamide B, C-8 monochlorinated isomalbrancheamide B, and dichlorinated malbrancheamide. MalA is also able to brominate premalbrancheamide at C-9 to yield malbrancheamide C, and, to a lesser extend, at C-8 to yield isomalbrancheamide C. Finally, malA can brominate C-9 monochlorinated malbrancheamide B at C-8 to yield malbrancheamide D, or C-8 monochlorinated isomalbrancheamide B at C-9 to produce isomalbrancheamide D. The polypeptide is Nonribisomal peptide synthetase malG (Malbranchea aurantiaca).